The following is a 101-amino-acid chain: NAD(P)H-quinone oxidoreductase subunit 4L, chloroplastic (101 aa).

3 consecutive transmembrane segments (helical) span residues isoleucine 2–isoleucine 22, methionine 32–phenylalanine 52, and isoleucine 61–valine 81.

It belongs to the complex I subunit 4L family. As to quaternary structure, NDH is composed of at least 16 different subunits, 5 of which are encoded in the nucleus.

It is found in the plastid. The protein localises to the chloroplast thylakoid membrane. The catalysed reaction is a plastoquinone + NADH + (n+1) H(+)(in) = a plastoquinol + NAD(+) + n H(+)(out). It catalyses the reaction a plastoquinone + NADPH + (n+1) H(+)(in) = a plastoquinol + NADP(+) + n H(+)(out). Its function is as follows. NDH shuttles electrons from NAD(P)H:plastoquinone, via FMN and iron-sulfur (Fe-S) centers, to quinones in the photosynthetic chain and possibly in a chloroplast respiratory chain. The immediate electron acceptor for the enzyme in this species is believed to be plastoquinone. Couples the redox reaction to proton translocation, and thus conserves the redox energy in a proton gradient. This is NAD(P)H-quinone oxidoreductase subunit 4L, chloroplastic from Arabis hirsuta (Hairy rock-cress).